The following is a 309-amino-acid chain: Methionine synthase (309 aa).

Zn(2+)-binding residues include His201, Cys203, Glu224, and Cys285.

This sequence belongs to the archaeal MetE family. Zn(2+) is required as a cofactor.

Its pathway is amino-acid biosynthesis; L-methionine biosynthesis via de novo pathway. Its activity is regulated as follows. Is activated by phosphates. Its function is as follows. Catalyzes the transfer of a methyl group to L-homocysteine resulting in methionine formation. Can use methylcobalamin and methylcobinamide as methyl donors, but methylcobalamin is not considered to be the physiological substrate. It was proposed that, in vivo, a so-far-unidentified enzyme catalyzes methyltransfer from 5-methyltetrahydromethanopterin (5-CH3-H4MPT) to a corrinoid protein, and that the MetE gene product catalyzes the further transfer to L-homocysteine. Is not active with L-cysteine, coenzyme M, coenzyme B, glutathione or dithiothreitol as substrate. The polypeptide is Methionine synthase (Methanothermobacter marburgensis (strain ATCC BAA-927 / DSM 2133 / JCM 14651 / NBRC 100331 / OCM 82 / Marburg) (Methanobacterium thermoautotrophicum)).